The sequence spans 391 residues: S-adenosylmethionine synthase (391 aa).

ATP is bound at residue His19. Asp21 contributes to the Mg(2+) binding site. Glu47 lines the K(+) pocket. L-methionine contacts are provided by Glu60 and Gln103. The interval 103 to 113 is flexible loop; sequence QSADIAQGVDR. ATP-binding positions include 168 to 170, 236 to 237, Asp245, 251 to 252, Ala268, and Lys272; these read DGK, RF, and RK. Asp245 serves as a coordination point for L-methionine. Lys276 serves as a coordination point for L-methionine.

This sequence belongs to the AdoMet synthase family. In terms of assembly, homotetramer; dimer of dimers. It depends on Mg(2+) as a cofactor. The cofactor is K(+).

The protein resides in the cytoplasm. It catalyses the reaction L-methionine + ATP + H2O = S-adenosyl-L-methionine + phosphate + diphosphate. It participates in amino-acid biosynthesis; S-adenosyl-L-methionine biosynthesis; S-adenosyl-L-methionine from L-methionine: step 1/1. Functionally, catalyzes the formation of S-adenosylmethionine (AdoMet) from methionine and ATP. The overall synthetic reaction is composed of two sequential steps, AdoMet formation and the subsequent tripolyphosphate hydrolysis which occurs prior to release of AdoMet from the enzyme. The protein is S-adenosylmethionine synthase of Nitratidesulfovibrio vulgaris (strain ATCC 29579 / DSM 644 / CCUG 34227 / NCIMB 8303 / VKM B-1760 / Hildenborough) (Desulfovibrio vulgaris).